Reading from the N-terminus, the 89-residue chain is Small ribosomal subunit protein uS15 (89 aa).

This sequence belongs to the universal ribosomal protein uS15 family. Part of the 30S ribosomal subunit. Forms a bridge to the 50S subunit in the 70S ribosome, contacting the 23S rRNA.

Functionally, one of the primary rRNA binding proteins, it binds directly to 16S rRNA where it helps nucleate assembly of the platform of the 30S subunit by binding and bridging several RNA helices of the 16S rRNA. In terms of biological role, forms an intersubunit bridge (bridge B4) with the 23S rRNA of the 50S subunit in the ribosome. The protein is Small ribosomal subunit protein uS15 of Cupriavidus pinatubonensis (strain JMP 134 / LMG 1197) (Cupriavidus necator (strain JMP 134)).